We begin with the raw amino-acid sequence, 537 residues long: YNNNNKNNNNNDDGNINYQNTNEFKDNKKNMNFKNQYNNNYKFDENMNNSNTMHSRNSNVEEHLRNNSIDMNNSNINNYTNQQTRFSSFMENENENENKNYHTGGMNNNIHFKNKYDNNNSSMKNTDNNKTDTSYNMKGTINNDNNNMDYLRNINNINEYKGSAKNKFYTNYMNKNNLKFTQNNNDNMNINEDNNNNNNNNNNNNGVFSNYQNNNMNRNNSINIKRNLNNNNNINNNMNKMGSQDKNQNSNNNFYMNYNYQNRKNSMNNNMNNNMNNNMNHNMNNNMNHNMNNNMNHNMNNNMNHNMNNNMNNINSLDSDMSPNYHAHVKMSMMNYNNNESNTANPNQMNFEQTNNDNMKRENNNMNNYGYDDNTVHVNNNTPSTDFFSRAVGYNNNYLNNNNNMNSAVNNNSSNGNNMKNENSENKNVADNNDSLNNNKNNNNNINMNESINNNNTLNNNNEYNNQNNNEDEDDDDWGELGEDKYIDINSIMKKKNVILNQLEADLNDLSKKGNDGKNKKKNKMKKDDLFVLPHTN.

Disordered regions lie at residues 1–22 (YNNN…QNTN), 187–254 (NMNI…NNNF), 336–372 (YNNN…YGYD), 399–479 (LNNN…DDWG), and 509–528 (DLSK…MKKD). Low complexity-rich tracts occupy residues 336–347 (YNNNESNTANPN) and 399–469 (LNNN…NQNN). Positions 470–479 (NEDEDDDDWG) are enriched in acidic residues. Positions 509–518 (DLSKKGNDGK) are enriched in basic and acidic residues.

The polypeptide is Asparagine-rich protein (Plasmodium falciparum).